The primary structure comprises 249 residues: Small ribosomal subunit protein uS2 (249 aa).

It belongs to the universal ribosomal protein uS2 family.

This Acinetobacter baylyi (strain ATCC 33305 / BD413 / ADP1) protein is Small ribosomal subunit protein uS2.